Here is a 79-residue protein sequence, read N- to C-terminus: Small ribosomal subunit protein bS16cz (79 aa).

The protein belongs to the bacterial ribosomal protein bS16 family.

The protein resides in the plastid. It is found in the chloroplast. This chain is Small ribosomal subunit protein bS16cz, found in Arabidopsis thaliana (Mouse-ear cress).